Reading from the N-terminus, the 255-residue chain is Triosephosphate isomerase (255 aa).

A substrate-binding site is contributed by 15–17; that stretch reads NWK. The Electrophile role is filled by His-100. Glu-172 serves as the catalytic Proton acceptor. Substrate-binding positions include Gly-178, Ser-218, and 239–240; that span reads GG.

Belongs to the triosephosphate isomerase family. In terms of assembly, homodimer.

The protein localises to the cytoplasm. It catalyses the reaction D-glyceraldehyde 3-phosphate = dihydroxyacetone phosphate. It functions in the pathway carbohydrate biosynthesis; gluconeogenesis. Its pathway is carbohydrate degradation; glycolysis; D-glyceraldehyde 3-phosphate from glycerone phosphate: step 1/1. Its function is as follows. Involved in the gluconeogenesis. Catalyzes stereospecifically the conversion of dihydroxyacetone phosphate (DHAP) to D-glyceraldehyde-3-phosphate (G3P). This is Triosephosphate isomerase from Clostridium tetani (strain Massachusetts / E88).